The chain runs to 887 residues: Amyloid-beta-like protein (887 aa).

The signal sequence occupies residues 1-27 (MCAALRRNLLLRSLWVVLAIGTAQVQA). The Extracellular segment spans residues 28–813 (ASPRWEPQIA…HAAKEGRNVY (786 aa)). Residues 30-133 (PRWEPQIAVL…KPFRCLGPFQ (104 aa)) are GFLD subdomain. The E1 domain maps to 30 to 199 (PRWEPQIAVL…SGVEFVCCPK (170 aa)). Cystine bridges form between C40–C70, C81–C128, C106–C116, C143–C197, C154–C184, and C168–C196. The segment at 141–199 (EGCLFDHIHNASRCWPFVRWNQTGAAACQERGMQMRSFAMLLPCGISVFSGVEFVCCPK) is cuBD subdomain. N-linked (GlcNAc...) asparagine glycans are attached at residues N150 and N161. Disordered stretches follow at residues 225–365 (NDEL…STPQ) and 377–396 (NSGN…QPTS). 2 N-linked (GlcNAc...) asparagine glycosylation sites follow: N237 and N240. Positions 246–267 (NEDDLDDEDDLMGDDEEDDMVA) are enriched in acidic residues. The segment covering 268–292 (DEAATAGGSPNTGSSGDSNSGSLDD) has biased composition (low complexity). Residues 293–321 (INAEYDSGEEGDNYEEDGAGSESEAEVEA) show a composition bias toward acidic residues. Residues 329 to 352 (AKVVSLKSDSSSPSSAPVAPAPEK) are compositionally biased toward low complexity. The 203-residue stretch at 395–597 (TSDPYFTHFD…AKIAQLMNDY (203 aa)) folds into the E2 domain. N574 is a glycosylation site (N-linked (GlcNAc...) asparagine). Residues 675 to 743 (KSQVAEQQSQ…TEYGEATVSS (69 aa)) form a disordered region. Residues 681 to 699 (QQSQPTQSSTQSQAQQQQQ) are compositionally biased toward low complexity. A helical membrane pass occupies residues 814 to 834 (FTLSFAGIALMAAVFVGVAVA). Residues 835–887 (KWRTSRSPHAQGFIEVDQNVTTHHPIVREEKIVPNMQINGYENPTYKYFEVKE) are Cytoplasmic-facing. The YENPXY motif signature appears at 875–880 (YENPTY).

Belongs to the APP family. In terms of assembly, interacts (via the intracellular domain, ICD) with APP-BP1. In terms of tissue distribution, expressed in postmitotic neurons in the central and peripheral nervous systems. Within the nervous system, transcripts are not observed in neuroblasts, newly generated neurons and at least one class of presumed glial cells.

The protein localises to the membrane. Its function is as follows. During development, plays a role in the regulation of the neddylation pathway. Appl and APP-BP1 interact antagonistically during development. The sequence is that of Amyloid-beta-like protein (Appl) from Drosophila melanogaster (Fruit fly).